A 697-amino-acid chain; its full sequence is Polyribonucleotide nucleotidyltransferase (697 aa).

The Mg(2+) site is built by Asp-486 and Asp-492. In terms of domain architecture, KH spans 553 to 612; sequence PRIHTIKIHPDKIKDVIGKCGSVIRALTEETKTIIDIEDDGTVTVAATDSIKAQQAICRI. The region spanning 622-690 is the S1 motif domain; the sequence is GSIYHGKVTR…RQGRIRLSMK (69 aa).

It belongs to the polyribonucleotide nucleotidyltransferase family. Component of the RNA degradosome, which is a multiprotein complex involved in RNA processing and mRNA degradation. It depends on Mg(2+) as a cofactor.

It is found in the cytoplasm. The enzyme catalyses RNA(n+1) + phosphate = RNA(n) + a ribonucleoside 5'-diphosphate. Involved in mRNA degradation. Catalyzes the phosphorolysis of single-stranded polyribonucleotides processively in the 3'- to 5'-direction. This chain is Polyribonucleotide nucleotidyltransferase, found in Baumannia cicadellinicola subsp. Homalodisca coagulata.